We begin with the raw amino-acid sequence, 491 residues long: Subtilase-type proteinase RRT12 (491 aa).

The N-terminal stretch at 1–17 is a signal peptide; the sequence is MKPQCILISLLVNLAYA. N-linked (GlcNAc...) asparagine glycosylation is found at Asn38, Asn64, Asn106, and Asn121. One can recognise a Peptidase S8 domain in the interval 142 to 442; that stretch reads PFDVGDKDRY…FPRLNIEAIA (301 aa). Residues Asp174 and His205 each act as charge relay system in the active site. 2 N-linked (GlcNAc...) asparagine glycosylation sites follow: Asn268 and Asn356. Ser365 functions as the Charge relay system in the catalytic mechanism. Asn449 is a glycosylation site (N-linked (GlcNAc...) asparagine).

This sequence belongs to the peptidase S8 family. N-glycosylated.

Its subcellular location is the spore wall. Its function is as follows. Subtilisin-related protease involved in the formation of a protective dityrosine layer required for spore wall assembly. Identified in a screen for mutants with increased levels of rDNA transcription. In Saccharomyces cerevisiae (strain ATCC 204508 / S288c) (Baker's yeast), this protein is Subtilase-type proteinase RRT12 (RRT12).